The primary structure comprises 860 residues: JmjC domain-containing histone demethylation protein 1 (860 aa).

Disordered regions lie at residues 1–45 (MSEQ…EEGK), 117–212 (STSP…PKRK), and 408–440 (DVKEKGRGNDSREGSEIRKEGSHLTEGDNGGEI). The PHD-type zinc-finger motif lies at 23–116 (PEPCPLCRET…KWYCAPCLAR (94 aa)). Composition is skewed to basic and acidic residues over residues 183–192 (IDMKSEREQQ) and 408–433 (DVKEKGRGNDSREGSEIRKEGSHLTE). Residues 416–579 (NDSREGSEIR…TQLRLRQIEI (164 aa)) form the JmjC domain. Position 471 (T471) interacts with substrate. Fe cation contacts are provided by H474 and D476. Residue K491 coordinates substrate. H547 is a Fe cation binding site. 2 disordered regions span residues 744–795 (HPPA…ANEN) and 837–860 (GPKLDKEKISQPQGKVEEDMDIDH). The segment covering 750–763 (ENRQSPQIETTTVQ) has biased composition (polar residues). Low complexity predominate over residues 767–795 (PSTSSSDAISGSGPGASPGASANGGANEN).

Belongs to the JHDM1 histone demethylase family. It depends on Fe(2+) as a cofactor.

The protein resides in the nucleus. The enzyme catalyses N(6),N(6)-dimethyl-L-lysyl(36)-[histone H3] + 2 2-oxoglutarate + 2 O2 = L-lysyl(36)-[histone H3] + 2 formaldehyde + 2 succinate + 2 CO2. Its function is as follows. Histone demethylase that specifically demethylates 'Lys-36' of histone H3, thereby playing a central role in histone code. The protein is JmjC domain-containing histone demethylation protein 1 (JHD1) of Cryptococcus neoformans var. neoformans serotype D (strain JEC21 / ATCC MYA-565) (Filobasidiella neoformans).